A 1072-amino-acid chain; its full sequence is Integrator complex subunit 3 homolog (1072 aa).

Disordered regions lie at residues Tyr920–Ile941 and Asp1002–Asp1072. Ser1042, Ser1043, Ser1047, and Ser1048 each carry phosphoserine.

The protein belongs to the Integrator subunit 3 family. In terms of assembly, belongs to the multiprotein complex Integrator, at least composed of IntS1, IntS2, IntS3, IntS4, omd/IntS5, IntS6, defl/IntS7, IntS8, IntS9, IntS10, IntS11, IntS12, asun/IntS13, IntS14 and IntS15. The core complex associates with protein phosphatase 2A subunits mts/PP2A and Pp2A-29B, to form the Integrator-PP2A (INTAC) complex.

Its subcellular location is the nucleus. It is found in the cytoplasm. Component of the integrator complex, a multiprotein complex that terminates RNA polymerase II (Pol II) transcription in the promoter-proximal region of genes. The integrator complex provides a quality checkpoint during transcription elongation by driving premature transcription termination of transcripts that are unfavorably configured for transcriptional elongation: the complex terminates transcription by (1) catalyzing dephosphorylation of the C-terminal domain (CTD) of Pol II subunit Polr2A/Rbp1 and Spt5, and (2) degrading the exiting nascent RNA transcript via endonuclease activity. The integrator complex is also involved in the 3'-end processing of the U7 snRNA, and also the spliceosomal snRNAs U1, U2, U4 and U5. This chain is Integrator complex subunit 3 homolog (IntS3), found in Drosophila erecta (Fruit fly).